We begin with the raw amino-acid sequence, 485 residues long: MTITLQQLIALSPLLIVGLTVVVVMLCIAWRRNHFVNATMTVIGLNIALLSLYFVGQVGPTDVTPLLRVDGFSMFYTGLVLLASLATSTFAYPWLQGYPDNRDEFYLLVLIAALGGILLSSANHLASLFIGIELLSLPLFGLVGYAFRLKRSLEASIKYMLLSAAASSFLLFGMALIYAESGDMSFASLGKSLSDHQIHEPLLLAGLGMMIVGLGFKLSLVPFQLWTPDVYQGAPAPVSTFLATAGKIAVFGAVMRLFLYAPVADSESVRIVLSIIAFASIMFGNVMAVSQTNIKRLLGYSSIAHLGYLLVALIAVQSHQLALETVGVYLVGYLFSSLGAFGVVSLMSSPYRGPDADSLFSYRGLFWHKPILSAVMTVMMLSLAGIPMTLGFFGKFYVLAVGVNAELWWLTGAVVLGSAIGLYYYLRVMVSLFLNAPQVLQRDTPNNWALTAGGVVVLISSIVVLFFGLYPQPLISLVQLVQPMM.

The next 14 membrane-spanning stretches (helical) occupy residues 8–28 (LIALSPLLIVGLTVVVVMLCI), 35–55 (FVNATMTVIGLNIALLSLYFV), 75–95 (FYTGLVLLASLATSTFAYPWL), 105–125 (FYLLVLIAALGGILLSSANHL), 127–147 (SLFIGIELLSLPLFGLVGYAF), 159–179 (YMLLSAAASSFLLFGMALIYA), 203–223 (LLAGLGMMIVGLGFKLSLVPF), 235–255 (PAPVSTFLATAGKIAVFGAVM), 271–291 (IVLSIIAFASIMFGNVMAVSQ), 297–317 (LLGYSSIAHLGYLLVALIAVQ), 326–346 (VGVYLVGYLFSSLGAFGVVSL), 374–394 (AVMTVMMLSLAGIPMTLGFFG), 407–426 (LWWLTGAVVLGSAIGLYYYL), and 449–469 (ALTAGGVVVLISSIVVLFFGL).

It belongs to the complex I subunit 2 family. NDH-1 is composed of 13 different subunits. Subunits NuoA, H, J, K, L, M, N constitute the membrane sector of the complex.

It is found in the cell inner membrane. The catalysed reaction is a quinone + NADH + 5 H(+)(in) = a quinol + NAD(+) + 4 H(+)(out). Its function is as follows. NDH-1 shuttles electrons from NADH, via FMN and iron-sulfur (Fe-S) centers, to quinones in the respiratory chain. The immediate electron acceptor for the enzyme in this species is believed to be ubiquinone. Couples the redox reaction to proton translocation (for every two electrons transferred, four hydrogen ions are translocated across the cytoplasmic membrane), and thus conserves the redox energy in a proton gradient. The chain is NADH-quinone oxidoreductase subunit N from Pectobacterium atrosepticum (strain SCRI 1043 / ATCC BAA-672) (Erwinia carotovora subsp. atroseptica).